The following is a 178-amino-acid chain: uncharacterized protein (178 aa).

A signal peptide spans 1 to 20; that stretch reads MKKLLVASLALLILTPVALA.

This is an uncharacterized protein from Archaeoglobus fulgidus (strain ATCC 49558 / DSM 4304 / JCM 9628 / NBRC 100126 / VC-16).